Here is a 342-residue protein sequence, read N- to C-terminus: Polyprenyl transferase trt2 (342 aa).

Transmembrane regions (helical) follow at residues 71-91 (VVGVAYTAAIAPVSLPATVLL), 95-115 (IILSLWGFLIRSGGCAWNDLI), 141-161 (AALLTAIIFGCGGLLLLLLPS), 163-183 (CTVEAGIILFFALLYPFGKRF), 187-207 (PQLILVNIAWAIPMAMSSLEV), 216-236 (TLSMCIFIASVIVMIDVVYAC), 261-278 (LAYGFFFSGAISLLLGGV), 282-304 (LGLPFIVFSVGGHIFGFLRFLSV), and 319-339 (AKSSCLLATVFWVLGFFLEYL).

The protein belongs to the UbiA prenyltransferase family. Mg(2+) serves as cofactor.

It localises to the membrane. It catalyses the reaction 3,5-dimethylorsellinate + (2E,6E)-farnesyl diphosphate = (3R)-3-farnesyl-6-hydroxy-2,3,5-trimethyl-4-oxocyclohexa-1,5-diene-1-carboxylate + diphosphate + H(+). It functions in the pathway secondary metabolite biosynthesis; terpenoid biosynthesis. Functionally, polyprenyl transferase; part of the gene cluster that mediates the biosynthesis of terretonin, a fungal meroterpenoid that acts as a mycotoxin. The first step of the pathway is the synthesis of 3,5-dimethylorsellinic acid (DMOA) by the polyketide synthase trt4. DMOA is then prenylated into farnesyl-DMOA by the polyprenyl transferase trt2. Methylation by the methyltransferase trt5 then leads to farnesyl-DMOA methyl ester which is further subject to epoxidation by the FAD-dependent monooxygenase trt8 to yield epoxyfarnesyl-DMOA methyl ester. Cyclization of epoxyfarnesyl-DMOA methyl ester by the terpene cyclase trt1 leads to a tetracycle intermediate which is in turn converted to preterretonin. Dehydrogenase trt9 comes next to transform preterretonin to preterrenoid. The FAD-dependent monooxygenase trt3 is then required for the C-hydroxylation at C16 of preterrenoid to yield terrenoid. The cytochrome P450 trt6 catalyzes three successive oxidations to transform terrenoid into an unstable intermediate, which then undergoes the D-ring expansion and unusual rearrangement of the methoxy group to afford the core skeleton of terretonin. Trt14 catalyzes the D-ring expansion of terretonin involving intramolecular methoxy rearrangement as well as the hydrolysis of the expanded D-ring and the methyl ester moiety. Finally, the nonheme iron-dependent dioxygenase trt7 accomplishes the last two oxidation reactions steps to complete the biosynthesis of terretonin. Terretonin C is produced via spontaneous decarboxylation of the terretonin precursor. Another shunt product of the terretonin biosynthesis is dihydrofarnesyl-DMOA, derived from epoxyfarnesyl-DMOA through hydrolysis of the epoxide. This chain is Polyprenyl transferase trt2, found in Aspergillus terreus (strain NIH 2624 / FGSC A1156).